We begin with the raw amino-acid sequence, 278 residues long: S-formylglutathione hydrolase YeiG (278 aa).

Residues Ser145, Asp223, and His256 each act as charge relay system in the active site.

It belongs to the esterase D family.

It carries out the reaction S-formylglutathione + H2O = formate + glutathione + H(+). Its function is as follows. Serine hydrolase involved in the detoxification of formaldehyde. Hydrolyzes S-formylglutathione to glutathione and formate. The polypeptide is S-formylglutathione hydrolase YeiG (yeiG) (Shigella flexneri serotype 5b (strain 8401)).